Reading from the N-terminus, the 383-residue chain is tRNA-specific 2-thiouridylase MnmA (383 aa).

ATP is bound by residues 9–16 and Met-35; that span reads GMSGGVDS. The tract at residues 95 to 97 is interaction with target base in tRNA; the sequence is NPD. Residue Cys-100 is the Nucleophile of the active site. Cysteines 100 and 198 form a disulfide. Gly-124 is a binding site for ATP. Residues 148 to 150 are interaction with tRNA; it reads KDQ. The active-site Cysteine persulfide intermediate is Cys-198. The tract at residues 310-311 is interaction with tRNA; it reads RY.

This sequence belongs to the MnmA/TRMU family.

It localises to the cytoplasm. It catalyses the reaction S-sulfanyl-L-cysteinyl-[protein] + uridine(34) in tRNA + AH2 + ATP = 2-thiouridine(34) in tRNA + L-cysteinyl-[protein] + A + AMP + diphosphate + H(+). Functionally, catalyzes the 2-thiolation of uridine at the wobble position (U34) of tRNA, leading to the formation of s(2)U34. The polypeptide is tRNA-specific 2-thiouridylase MnmA (Paraburkholderia phytofirmans (strain DSM 17436 / LMG 22146 / PsJN) (Burkholderia phytofirmans)).